The primary structure comprises 231 residues: ATP phosphoribosyltransferase (231 aa).

It belongs to the ATP phosphoribosyltransferase family. Short subfamily. In terms of assembly, heteromultimer composed of HisG and HisZ subunits.

It localises to the cytoplasm. The catalysed reaction is 1-(5-phospho-beta-D-ribosyl)-ATP + diphosphate = 5-phospho-alpha-D-ribose 1-diphosphate + ATP. Its pathway is amino-acid biosynthesis; L-histidine biosynthesis; L-histidine from 5-phospho-alpha-D-ribose 1-diphosphate: step 1/9. In terms of biological role, catalyzes the condensation of ATP and 5-phosphoribose 1-diphosphate to form N'-(5'-phosphoribosyl)-ATP (PR-ATP). Has a crucial role in the pathway because the rate of histidine biosynthesis seems to be controlled primarily by regulation of HisG enzymatic activity. In Brucella suis biovar 1 (strain 1330), this protein is ATP phosphoribosyltransferase.